The chain runs to 115 residues: Putative membrane protein insertion efficiency factor (115 aa).

Positions 81 to 115 are disordered; sequence DPRPGRCGCKDAGPAVSAGSTEGNPGRRTDGTDPD. The segment covering 105–115 has biased composition (basic and acidic residues); that stretch reads PGRRTDGTDPD.

Belongs to the UPF0161 family.

It localises to the cell inner membrane. Could be involved in insertion of integral membrane proteins into the membrane. The protein is Putative membrane protein insertion efficiency factor of Rhodospirillum rubrum (strain ATCC 11170 / ATH 1.1.1 / DSM 467 / LMG 4362 / NCIMB 8255 / S1).